We begin with the raw amino-acid sequence, 830 residues long: Ribosome biogenesis protein ERB1 (830 aa).

Positions 1-141 (MAPQPLKVGT…ENKDLPVDEK (141 aa)) are disordered. Acidic residues-rich tracts occupy residues 35 to 44 (VSEESDEEFG) and 52 to 109 (MSDD…DSDS). Over residues 131–141 (EENKDLPVDEK) the composition is skewed to basic and acidic residues. 6 WD repeats span residues 481 to 520 (PGDT…EVWR), 523 to 563 (LHAG…APHI), 660 to 698 (KTPG…LIRT), 701 to 740 (SGVK…KPYK), 744 to 783 (YHNR…DLMQ), and 799 to 830 (IDGI…LWCS).

The protein belongs to the WD repeat BOP1/ERB1 family. In terms of assembly, component of the NOP7 complex, composed of ERB1, NOP7 and YTM1. The complex is held together by ERB1, which interacts with NOP7 via its N-terminal domain and with YTM1 via a high-affinity interaction between the seven-bladed beta-propeller domains of the 2 proteins. The NOP7 complex associates with the 66S pre-ribosome.

It is found in the nucleus. The protein resides in the nucleolus. Its subcellular location is the nucleoplasm. Its function is as follows. Component of the NOP7 complex, which is required for maturation of the 25S and 5.8S ribosomal RNAs and formation of the 60S ribosome. This Cryptococcus neoformans var. neoformans serotype D (strain B-3501A) (Filobasidiella neoformans) protein is Ribosome biogenesis protein ERB1.